Here is a 125-residue protein sequence, read N- to C-terminus: Protein ApaG (125 aa).

Residues 3–125 form the ApaG domain; sequence TAVTEGIEVT…FPLVVPGTLN (123 aa).

The chain is Protein ApaG from Anaeromyxobacter sp. (strain K).